The chain runs to 196 residues: MSRYRGPRLKKIRRLGALPGLTRKTPKSGSNLKKKFHSGKKEQYRIRLQEKQKLRFHYGLTERQLLRYVHIAGKAKRSTGQVLLQLLEMRLDNILFRLGMASTIPGARQLVNHRHILVNGRIVNIPSFRCKPRDIITTKDNQRSKGLVQTLMASSDPGKLPKHLTIDTLEYKGLVNKILDRKWVGLKINELLVVEY.

The segment at 17 to 36 (ALPGLTRKTPKSGSNLKKKF) is disordered. An S4 RNA-binding domain is found at 89–169 (MRLDNILFRL…LPKHLTIDTL (81 aa)).

This sequence belongs to the universal ribosomal protein uS4 family. In terms of assembly, part of the 30S ribosomal subunit. Contacts protein S5. The interaction surface between S4 and S5 is involved in control of translational fidelity.

Its subcellular location is the plastid. The protein resides in the chloroplast. In terms of biological role, one of the primary rRNA binding proteins, it binds directly to 16S rRNA where it nucleates assembly of the body of the 30S subunit. With S5 and S12 plays an important role in translational accuracy. The chain is Small ribosomal subunit protein uS4c (rps4) from Festuca gigantea (Giant fescue).